The primary structure comprises 101 residues: Small ribosomal subunit protein uS14 (101 aa).

Residues 32 to 67 are disordered; the sequence is SDAKRSDEEREAARLGLQKLPRNANPTRQRNRCEIT. The segment covering 33–44 has biased composition (basic and acidic residues); sequence DAKRSDEEREAA.

Belongs to the universal ribosomal protein uS14 family. As to quaternary structure, part of the 30S ribosomal subunit. Contacts proteins S3 and S10.

Functionally, binds 16S rRNA, required for the assembly of 30S particles and may also be responsible for determining the conformation of the 16S rRNA at the A site. This chain is Small ribosomal subunit protein uS14, found in Paracidovorax citrulli (strain AAC00-1) (Acidovorax citrulli).